Consider the following 259-residue polypeptide: Phosphoadenosine 5'-phosphosulfate reductase (259 aa).

The active-site Nucleophile; cysteine thiosulfonate intermediate is the Cys244.

It belongs to the PAPS reductase family. CysH subfamily.

It localises to the cytoplasm. It carries out the reaction [thioredoxin]-disulfide + sulfite + adenosine 3',5'-bisphosphate + 2 H(+) = [thioredoxin]-dithiol + 3'-phosphoadenylyl sulfate. It participates in sulfur metabolism; hydrogen sulfide biosynthesis; sulfite from sulfate: step 3/3. Catalyzes the formation of sulfite from phosphoadenosine 5'-phosphosulfate (PAPS) using thioredoxin as an electron donor. The chain is Phosphoadenosine 5'-phosphosulfate reductase from Vibrio parahaemolyticus serotype O3:K6 (strain RIMD 2210633).